The primary structure comprises 202 residues: Protein phosphatase 1 regulatory subunit 1B (202 aa).

Met1 carries the post-translational modification N-acetylmethionine. The disordered stretch occupies residues 1-202 (MDPKDRKKIQ…QRPAHPEPGT (202 aa)). The residue at position 34 (Thr34) is a Phosphothreonine; by PKA. A compositionally biased stretch (basic and acidic residues) spans 41–63 (LSEHSSPEEEASPHQRASGEGHH). Phosphoserine occurs at positions 45 and 46. At Thr75 the chain carries Phosphothreonine; by CDK5. The segment covering 89-100 (HLQSISNLGENQ) has biased composition (polar residues). At Ser102 the chain carries Phosphoserine. Residues 109–118 (GELRELGYPR) show a composition bias toward basic and acidic residues. Residues 119–136 (EEEEEEEEEDEEEEEDSQ) are compositionally biased toward acidic residues. Residue Ser135 is modified to Phosphoserine. Positions 191–202 (EPQRPAHPEPGT) are enriched in basic and acidic residues.

It belongs to the protein phosphatase inhibitor 1 family. Dopamine- and cyclic AMP-regulated neuronal phosphoprotein. Post-translationally, phosphorylation of Thr-34 is required for activity.

Its subcellular location is the cytoplasm. Inhibitor of protein-phosphatase 1. This is Protein phosphatase 1 regulatory subunit 1B (PPP1R1B) from Bos taurus (Bovine).